The primary structure comprises 427 residues: Enolase (427 aa).

A (2R)-2-phosphoglycerate-binding site is contributed by Gln163. The active-site Proton donor is Glu205. Mg(2+)-binding residues include Asp242, Glu285, and Asp312. The (2R)-2-phosphoglycerate site is built by Lys337, Arg366, Ser367, and Lys388. Lys337 functions as the Proton acceptor in the catalytic mechanism.

Belongs to the enolase family. Requires Mg(2+) as cofactor.

The protein resides in the cytoplasm. Its subcellular location is the secreted. It is found in the cell surface. The enzyme catalyses (2R)-2-phosphoglycerate = phosphoenolpyruvate + H2O. The protein operates within carbohydrate degradation; glycolysis; pyruvate from D-glyceraldehyde 3-phosphate: step 4/5. Functionally, catalyzes the reversible conversion of 2-phosphoglycerate (2-PG) into phosphoenolpyruvate (PEP). It is essential for the degradation of carbohydrates via glycolysis. This chain is Enolase, found in Bradyrhizobium sp. (strain ORS 278).